A 295-amino-acid chain; its full sequence is Reticulon-like protein 1 (295 aa).

The Cytoplasmic portion of the chain corresponds to 1–50 (MSASAQHSQAQQQQQQKSCNCDLLLWRNPVQTGKYFGGSLLALLILKKVN). The Reticulon domain occupies 20–220 (NCDLLLWRNP…ISNLVKSKTA (201 aa)). The helical transmembrane segment at 51-73 (LITFFLKVAYTILFTTGSIEFVS) threads the bilayer. Over 74-142 (KLFLGQGLIT…ALFLLHKFFS (69 aa)) the chain is Lumenal. The chain crosses the membrane as a helical span at residues 143–163 (WFSIWTIVFVADIFTFTLPVI). At 164 to 295 (YHSYKHEIDA…LQNELEKNNA (132 aa)) the chain is on the cytoplasmic side. Thr186 and Thr219 each carry phosphothreonine. Over residues 219-235 (TAPVSSTAGPQTASTSK) the composition is skewed to polar residues. The tract at residues 219 to 295 (TAPVSSTAGP…LQNELEKNNA (77 aa)) is disordered. The residue at position 232 (Ser232) is a Phosphoserine. The stretch at 265-295 (STTQEFNVDELSNELKKSTKNLQNELEKNNA) forms a coiled coil.

Interacts with POM33.

Its subcellular location is the endoplasmic reticulum membrane. In Saccharomyces cerevisiae (strain ATCC 204508 / S288c) (Baker's yeast), this protein is Reticulon-like protein 1 (RTN1).